The sequence spans 544 residues: MAAKDVQFGNEVRQKMVNGVNILANAVRVTLGPKGRNVVVDRAFGGPHITKDGVTVAKEIELKDKFENMGAQMVKEVASKTNDVAGDGTTTATVLAQSIVAEGMKYVTAGMNPTDLKRGIDKAVAALVEELKNIAKPCDTSKEIAQVGSISANSDEQVGAIIAEAMEKVGKEGVITVEDGKSLENELDVVEGMQFDRGYLSPYFINDAEKQIAALDNPFVLLFDKKISNIRDLLPVLEQVAKASRPLLIIAEDVEGEALATLVVNNIRGILKTVAVKAPGFGDRRKAMLQDIAILTGGVVISEEVGLSLEKATLDDLGQAKRIEIGKENTTIIDGFGDAAQIEARVAEIRQQIETATSDYDKEKLQERVAKLAGGVAVIKVGAATEVEMKEKKDRVEDALHATRAAVEEGVVAGGGVALLRARAALENLHTGNADQDAGVQIVLRAVESPLRQIVANAGGEPSVVVNKVLEGKGNYGYNAGSGEYGDMIEMGVLDPAKVTRSALQHAASIAGLMLTTDCMIAEIPEDKPAVPDMGGMGGMGGMM.

ATP contacts are provided by residues 30–33 (TLGP), K51, 87–91 (DGTTT), G415, and D495.

It belongs to the chaperonin (HSP60) family. As to quaternary structure, forms a cylinder of 14 subunits composed of two heptameric rings stacked back-to-back. Interacts with the co-chaperonin GroES.

The protein resides in the cytoplasm. It carries out the reaction ATP + H2O + a folded polypeptide = ADP + phosphate + an unfolded polypeptide.. Functionally, together with its co-chaperonin GroES, plays an essential role in assisting protein folding. The GroEL-GroES system forms a nano-cage that allows encapsulation of the non-native substrate proteins and provides a physical environment optimized to promote and accelerate protein folding. In Neisseria meningitidis serogroup C (strain 053442), this protein is Chaperonin GroEL.